Reading from the N-terminus, the 118-residue chain is Small ribosomal subunit protein uS13 (118 aa).

The interval S94–K118 is disordered.

Belongs to the universal ribosomal protein uS13 family. As to quaternary structure, part of the 30S ribosomal subunit. Forms a loose heterodimer with protein S19. Forms two bridges to the 50S subunit in the 70S ribosome.

Located at the top of the head of the 30S subunit, it contacts several helices of the 16S rRNA. In the 70S ribosome it contacts the 23S rRNA (bridge B1a) and protein L5 of the 50S subunit (bridge B1b), connecting the 2 subunits; these bridges are implicated in subunit movement. Contacts the tRNAs in the A and P-sites. The polypeptide is Small ribosomal subunit protein uS13 (Shewanella sediminis (strain HAW-EB3)).